The chain runs to 424 residues: Histidine--tRNA ligase (424 aa).

Belongs to the class-II aminoacyl-tRNA synthetase family. As to quaternary structure, homodimer.

It is found in the cytoplasm. The enzyme catalyses tRNA(His) + L-histidine + ATP = L-histidyl-tRNA(His) + AMP + diphosphate + H(+). This Salmonella heidelberg (strain SL476) protein is Histidine--tRNA ligase.